Here is a 902-residue protein sequence, read N- to C-terminus: Glutamate receptor 4 (902 aa).

A signal peptide spans 1–20 (MRIICRQIVLLFSGFWGLAM). At 22–544 (AFPSSVQIGG…GVFSFLDPLA (523 aa)) the chain is on the extracellular side. Asparagine 52, asparagine 56, asparagine 258, asparagine 371, asparagine 407, and asparagine 414 each carry an N-linked (GlcNAc...) asparagine glycan. A disulfide bridge connects residues cysteine 84 and cysteine 331. Proline 500, threonine 502, and arginine 507 together coordinate L-glutamate. A helical transmembrane segment spans residues 545–565 (YEIWMCIVFAYIGVSVVLFLV). Residues 566-592 (SRFSPYEWHTEEPEDGKEGPSDQPPNE) lie on the Cytoplasmic side of the membrane. Residues 593-608 (FGIFNSLWFSLGAFMQ) constitute an intramembrane region (helical; Pore-forming). An intramembrane segment occupies 609–611 (QGC). Cysteine 611 carries the S-palmitoyl cysteine lipid modification. Topologically, residues 612 to 617 (DISPRS) are cytoplasmic. Residues 618–638 (LSGRIVGGVWWFFTLIIISSY) traverse the membrane as a helical segment. Over 639–813 (TANLAAFLTV…DKTSALSLSN (175 aa)) the chain is Extracellular. 3 residues coordinate L-glutamate: serine 676, threonine 677, and glutamate 727. Cysteine 740 and cysteine 795 are disulfide-bonded. A helical transmembrane segment spans residues 814-834 (VAGVFYILVGGLGLAMLVALI). Residues 835–902 (EFCYKSRAEA…GLAVIASDLP (68 aa)) are Cytoplasmic-facing. Cysteine 837 carries S-palmitoyl cysteine lipidation. Serine 862 carries the post-translational modification Phosphoserine.

It belongs to the glutamate-gated ion channel (TC 1.A.10.1) family. GRIA4 subfamily. In terms of assembly, homotetramer or heterotetramer of pore-forming glutamate receptor subunits. Tetramers may be formed by the dimerization of dimers. Interacts with EPB41L1 via its C-terminus. Isoform 3 interacts with PICK1. Found in a complex with GRIA1, GRIA2, GRIA3, CNIH2, CNIH3, CACNG2, CACNG3, CACNG4, CACNG5, CACNG7 and CACNG8. Interacts with CACNG5 and PRKCG. Found in a complex with GRIA1, GRIA2, GRIA3, DLG4, CACNG8 and CNIH2. Palmitoylated. Depalmitoylated upon L-glutamate stimulation. ZDHHC3/GODZ specifically palmitoylates Cys-611, which leads to Golgi retention and decreased cell surface expression. In contrast, Cys-837 palmitoylation does not affect cell surface expression but regulates stimulation-dependent endocytosis. In terms of processing, phosphorylated at Ser-862 by PRKCG; phosphorylation increases plasma membrane-associated GRI4 expression.

It is found in the cell membrane. The protein localises to the postsynaptic cell membrane. The protein resides in the cell projection. Its subcellular location is the dendrite. The enzyme catalyses Ca(2+)(in) = Ca(2+)(out). It carries out the reaction Na(+)(in) = Na(+)(out). It catalyses the reaction Mg(2+)(in) = Mg(2+)(out). Its function is as follows. Ionotropic glutamate receptor that functions as a ligand-gated cation channel, gated by L-glutamate and glutamatergic agonists such as alpha-amino-3-hydroxy-5-methyl-4-isoxazolepropionic acid (AMPA), quisqualic acid, and kainic acid. L-glutamate acts as an excitatory neurotransmitter at many synapses in the central nervous system and plays an important role in fast excitatory synaptic transmission. Binding of the excitatory neurotransmitter L-glutamate induces a conformation change, leading to the opening of the cation channel, and thereby converts the chemical signal to an electrical impulse upon entry of monovalent and divalent cations such as sodium and calcium. The receptor then desensitizes rapidly and enters a transient inactive state, characterized by the presence of bound agonist. In the presence of CACNG8, shows resensitization which is characterized by a delayed accumulation of current flux upon continued application of L-glutamate. This Mus musculus (Mouse) protein is Glutamate receptor 4.